Consider the following 144-residue polypeptide: Nucleoside diphosphate kinase (144 aa).

ATP is bound by residues lysine 11, phenylalanine 59, arginine 87, threonine 93, arginine 104, and asparagine 114. Catalysis depends on histidine 117, which acts as the Pros-phosphohistidine intermediate.

The protein belongs to the NDK family. As to quaternary structure, homotetramer. Requires Mg(2+) as cofactor.

Its subcellular location is the cytoplasm. The catalysed reaction is a 2'-deoxyribonucleoside 5'-diphosphate + ATP = a 2'-deoxyribonucleoside 5'-triphosphate + ADP. It carries out the reaction a ribonucleoside 5'-diphosphate + ATP = a ribonucleoside 5'-triphosphate + ADP. Functionally, major role in the synthesis of nucleoside triphosphates other than ATP. The ATP gamma phosphate is transferred to the NDP beta phosphate via a ping-pong mechanism, using a phosphorylated active-site intermediate. This Coxiella burnetii (strain CbuG_Q212) (Coxiella burnetii (strain Q212)) protein is Nucleoside diphosphate kinase.